The primary structure comprises 596 residues: NADH-quinone oxidoreductase subunit C/D (596 aa).

Positions M1 to Q186 are NADH dehydrogenase I subunit C. Positions D210–R596 are NADH dehydrogenase I subunit D.

The protein in the N-terminal section; belongs to the complex I 30 kDa subunit family. This sequence in the C-terminal section; belongs to the complex I 49 kDa subunit family. In terms of assembly, NDH-1 is composed of 13 different subunits. Subunits NuoB, CD, E, F, and G constitute the peripheral sector of the complex.

It localises to the cell inner membrane. The enzyme catalyses a quinone + NADH + 5 H(+)(in) = a quinol + NAD(+) + 4 H(+)(out). Functionally, NDH-1 shuttles electrons from NADH, via FMN and iron-sulfur (Fe-S) centers, to quinones in the respiratory chain. The immediate electron acceptor for the enzyme in this species is believed to be ubiquinone. Couples the redox reaction to proton translocation (for every two electrons transferred, four hydrogen ions are translocated across the cytoplasmic membrane), and thus conserves the redox energy in a proton gradient. This chain is NADH-quinone oxidoreductase subunit C/D, found in Salmonella dublin (strain CT_02021853).